The sequence spans 338 residues: Biotin synthase (338 aa).

Residues 46-270 (NEVQLSTLLS…VAVARITMPA (225 aa)) enclose the Radical SAM core domain. [4Fe-4S] cluster contacts are provided by Cys-61, Cys-65, and Cys-68. [2Fe-2S] cluster-binding residues include Cys-105, Cys-136, Cys-196, and Arg-274.

This sequence belongs to the radical SAM superfamily. Biotin synthase family. Homodimer. [4Fe-4S] cluster serves as cofactor. It depends on [2Fe-2S] cluster as a cofactor.

The enzyme catalyses (4R,5S)-dethiobiotin + (sulfur carrier)-SH + 2 reduced [2Fe-2S]-[ferredoxin] + 2 S-adenosyl-L-methionine = (sulfur carrier)-H + biotin + 2 5'-deoxyadenosine + 2 L-methionine + 2 oxidized [2Fe-2S]-[ferredoxin]. Its pathway is cofactor biosynthesis; biotin biosynthesis; biotin from 7,8-diaminononanoate: step 2/2. Catalyzes the conversion of dethiobiotin (DTB) to biotin by the insertion of a sulfur atom into dethiobiotin via a radical-based mechanism. The polypeptide is Biotin synthase (Rhizorhabdus wittichii (strain DSM 6014 / CCUG 31198 / JCM 15750 / NBRC 105917 / EY 4224 / RW1) (Sphingomonas wittichii)).